The primary structure comprises 297 residues: Phenylalanine-4-hydroxylase (297 aa).

Residues His-138, His-143, and Glu-184 each coordinate Fe cation.

The protein belongs to the biopterin-dependent aromatic amino acid hydroxylase family. As to quaternary structure, monomer. Requires Fe(2+) as cofactor.

It carries out the reaction (6R)-L-erythro-5,6,7,8-tetrahydrobiopterin + L-phenylalanine + O2 = (4aS,6R)-4a-hydroxy-L-erythro-5,6,7,8-tetrahydrobiopterin + L-tyrosine. It functions in the pathway amino-acid degradation; L-phenylalanine degradation; acetoacetate and fumarate from L-phenylalanine: step 1/6. The sequence is that of Phenylalanine-4-hydroxylase (phhA) from Chromobacterium violaceum (strain ATCC 12472 / DSM 30191 / JCM 1249 / CCUG 213 / NBRC 12614 / NCIMB 9131 / NCTC 9757 / MK).